A 155-amino-acid chain; its full sequence is Molybdopterin synthase catalytic subunit 2 (155 aa).

Substrate contacts are provided by residues 101 to 102 (HR), Lys-117, and 124 to 126 (KKE).

The protein belongs to the MoaE family. MOCS2B subfamily. In terms of assembly, heterotetramer; composed of 2 small (MOCS2A) and 2 large (MOCS2B) subunits.

Its subcellular location is the cytoplasm. The catalysed reaction is 2 [molybdopterin-synthase sulfur-carrier protein]-C-terminal-Gly-aminoethanethioate + cyclic pyranopterin phosphate + H2O = molybdopterin + 2 [molybdopterin-synthase sulfur-carrier protein]-C-terminal Gly-Gly + 2 H(+). The protein operates within cofactor biosynthesis; molybdopterin biosynthesis. Its function is as follows. Catalytic subunit of the molybdopterin synthase complex, a complex that catalyzes the conversion of precursor Z into molybdopterin. Acts by mediating the incorporation of 2 sulfur atoms from thiocarboxylated MOCS2A into precursor Z to generate a dithiolene group. The protein is Molybdopterin synthase catalytic subunit 2 of Aedes aegypti (Yellowfever mosquito).